We begin with the raw amino-acid sequence, 1214 residues long: Sodium bicarbonate cotransporter 3 (1214 aa).

Residues 1 to 12 (MERFRLEKKLPG) show a composition bias toward basic and acidic residues. Disordered regions lie at residues 1–22 (MERF…VDLG) and 52–93 (SKES…PSQR). The Extracellular portion of the chain corresponds to 1–608 (MERFRLEKKL…DFKDALSLQC (608 aa)). Phosphoserine is present on residues Ser52, Ser55, Ser84, Ser150, Leu165, and Cys168. Residues 55-72 (SRRRHRHRGHKHHHRRRK) are compositionally biased toward basic residues. Residues 73–85 (DKESDKEDGRESP) are compositionally biased toward basic and acidic residues. N-linked (GlcNAc...) asparagine glycosylation occurs at Asn171. 8 positions are modified to phosphoserine: Ser233, Ser242, Ser255, Arg258, Ser260, Thr263, Gly264, and Ala267. Asn269 carries an N-linked (GlcNAc...) asparagine glycan. 3 disordered regions span residues 289 to 346 (SRAG…IPTV), 362 to 408 (EEQK…ENST), and 552 to 572 (FHNG…HHAG). The segment covering 303 to 313 (VPTPQNSPPSS) has biased composition (pro residues). A compositionally biased stretch (low complexity) spans 314–332 (PSISRLTSRSSQESQRQAP). Positions 379–392 (SPQSAPGNLDNSKS) are enriched in polar residues. At Ser382 the chain carries Phosphoserine. Asn398 carries an N-linked (GlcNAc...) asparagine glycan. Residues Ser400 and Ser403 each carry the phosphoserine modification. The N-linked (GlcNAc...) asparagine glycan is linked to Asn406. Residues Ser407 and Ser556 each carry the phosphoserine modification. Position 557 is a phosphothreonine (Thr557). Residues 563-572 (TPKEAAHHAG) show a composition bias toward basic and acidic residues. The chain crosses the membrane as a helical span at residues 609-629 (LASILFLYCACMSPVITFGGL). Residues 630–637 (LGEATEGR) lie on the Cytoplasmic side of the membrane. The helical transmembrane segment at 638–658 (ISAIESLFGASLTGIAYSLFA) threads the bilayer. Residues 659-695 (GQPLTILGSTGPVLVFEKILYKFCRDYQLSYLSLRTS) are Extracellular-facing. The helical transmembrane segment at 696–716 (IGLWTSFLCIVLVATDASSLV) threads the bilayer. The Cytoplasmic segment spans residues 717-725 (CYITRFTEE). A helical membrane pass occupies residues 726 to 746 (AFAALICIIFIYEALEKLFDL). Lys742 carries the phosphoserine modification. Residues 747–817 (GETYAFNMHN…VFLGSACGHH (71 aa)) lie on the Extracellular side of the membrane. Cys766 and Cys768 are disulfide-bonded. Residues Pro771 and Pro774 each carry the phosphoserine modification. An N-linked (GlcNAc...) asparagine glycan is attached at Asn776. Position 780 is a phosphoserine (Ala780). N-linked (GlcNAc...) asparagine glycans are attached at residues Asn786 and Asn791. Cys802 and Cys814 form a disulfide bridge. The helical transmembrane segment at 818-838 (GPYIPDVLFWCVILFFTTFFL) threads the bilayer. Topologically, residues 839-861 (SSFLKQFKTKRYFPTKVRSTISD) are cytoplasmic. The helical transmembrane segment at 862 to 882 (FAVFLTIVIMVTIDYLVGVPS) threads the bilayer. Residues 883–908 (PKLHVPEKFEPTHPERGWIISPLGDN) are Extracellular-facing. A helical transmembrane segment spans residues 909 to 929 (PWWTLLIAAIPALLCTILIFM). Topologically, residues 930–954 (DQQITAVIINRKEHKLKKGAGYHLD) are cytoplasmic. A helical transmembrane segment spans residues 955 to 975 (LLMVGVMLGVCSVMGLPWFVA). Over 976–1011 (ATVLSISHVNSLKVESECSAPGEQPKFLGIREQRVT) the chain is Extracellular. Phosphoserine occurs at positions 1007, 1010, and 1016. Essential for cell membrane localization and transport activity regions lie at residues 1008 to 1131 (QRVT…KREL) and 1127 to 1214 (TKRE…ETSL). Residues 1012-1032 (GLMIFILMGLSVFMTSVLKFI) form a helical membrane-spanning segment. At 1033 to 1034 (PM) the chain is on the cytoplasmic side. The chain crosses the membrane as a helical span at residues 1035-1055 (PVLYGVFLYMGVSSLKGIQLF). At 1056 to 1092 (DRIKLFGMPAKHQPDLIYLRYVPLWKVHIFTVIQLTC) the chain is on the extracellular side. Residues Tyr1073, Val1077, Ser1102, Ala1105, Val1106, Pro1109, Met1111, and Leu1115 each carry the phosphoserine modification. A helical membrane pass occupies residues 1093–1113 (LVLLWVIKVSAAAVVFPMMVL). At 1114–1214 (ALVFVRKLMD…KKYVDAETSL (101 aa)) the chain is on the cytoplasmic side. The CA2-binding stretch occupies residues 1134-1136 (LDD). Basic and acidic residues predominate over residues 1144 to 1162 (KKEDDKKKKEKEEAERMLQ). Residues 1144 to 1169 (KKEDDKKKKEKEEAERMLQDDDDTVH) are disordered. Residue Thr1167 is modified to Phosphothreonine. 4 positions are modified to phosphoserine: Ser1176, Ser1188, Asp1201, and Ser1213. Residues 1211–1214 (ETSL) carry the PDZ-binding motif.

This sequence belongs to the anion exchanger (TC 2.A.31) family. In terms of assembly, interacts with CFTR through NHERF1/EBP50. Interacts with USH1C. Forms a complex with ATP6V1B1 and NHERF1/EBP50. Interacts in a pH dependent-manner with CA2/carbonic anhydrase 2. In terms of tissue distribution, highly expressed in testis and spleen. Also expressed in retina, colon, small intestine, ovary, thymus, prostate, muscle, heart and kidney. Expressed in skeletal muscle and heart muscle.

The protein localises to the basolateral cell membrane. It localises to the apical cell membrane. The protein resides in the cell projection. Its subcellular location is the stereocilium. It is found in the cell membrane. The catalysed reaction is hydrogencarbonate(in) + Na(+)(in) = hydrogencarbonate(out) + Na(+)(out). Transporter activity is regulated by CA2/carbonic anhydrase 2, cAMP and PKA. Insensitive to stilbene derivatives. Inhibited by 5-(N-ethyl-N-isopropyl)-amiloride (EIPA). Electroneutral sodium- and bicarbonate-dependent cotransporter with a Na(+):HCO3(-) 1:1 stoichiometry. Mediates the sodium-dependent bicarbonate transport important for pH recovery after acid load as well as for regulation of steady-state pH in the duodenum and vascular smooth muscle cells. Plays a key role in macrophage acidification, mediating bicarbonate import into the cytoplasm which is crucial for net acid extrusion and maintenance of cytoplasmic pH during phagocytosis. Provides cellular bicarbonate for de novo purine and pyrimidine synthesis and is a key mediator of de novo nucleotide synthesis downstream of mTORC1 signaling in proliferating cells. Its function is as follows. Plays a key role in macrophage acidification, mediating bicarbonate import into the cytoplasm which is crucial for net acid extrusion and maintenance of cytoplasmic pH during phagocytosis. The chain is Sodium bicarbonate cotransporter 3 (SLC4A7) from Homo sapiens (Human).